A 459-amino-acid polypeptide reads, in one-letter code: ATP synthase subunit beta (459 aa).

ATP is bound at residue 148 to 155 (GGAGVGKT).

The protein belongs to the ATPase alpha/beta chains family. F-type ATPases have 2 components, CF(1) - the catalytic core - and CF(0) - the membrane proton channel. CF(1) has five subunits: alpha(3), beta(3), gamma(1), delta(1), epsilon(1). CF(0) has three main subunits: a(1), b(2) and c(9-12). The alpha and beta chains form an alternating ring which encloses part of the gamma chain. CF(1) is attached to CF(0) by a central stalk formed by the gamma and epsilon chains, while a peripheral stalk is formed by the delta and b chains.

It is found in the cell inner membrane. It catalyses the reaction ATP + H2O + 4 H(+)(in) = ADP + phosphate + 5 H(+)(out). Functionally, produces ATP from ADP in the presence of a proton gradient across the membrane. The catalytic sites are hosted primarily by the beta subunits. The protein is ATP synthase subunit beta of Ruthia magnifica subsp. Calyptogena magnifica.